Here is a 233-residue protein sequence, read N- to C-terminus: Thrombin-like enzyme elegaxobin-2 (233 aa).

Residues 1-224 form the Peptidase S1 domain; it reads VIGGDECNIN…HLDWIKGIIA (224 aa). 6 disulfide bridges follow: Cys-7-Cys-138, Cys-25-Cys-41, Cys-73-Cys-231, Cys-117-Cys-185, Cys-149-Cys-164, and Cys-175-Cys-200. The Charge relay system role is filled by His-40. Asn-78 is a glycosylation site (N-linked (GlcNAc...) asparagine). The active-site Charge relay system is Asp-85. Ser-179 (charge relay system) is an active-site residue.

Belongs to the peptidase S1 family. Snake venom subfamily. Monomer. In terms of tissue distribution, expressed by the venom gland.

The protein resides in the secreted. Thrombin-like snake venom serine protease that clots rabbit fibrinogen. Only the beta chain of fibrinogen (FGB) is cleaved, releasing fibrinopeptide B. Human and bovine fibrinogen are unaffected. Also cleaves Met-Lys and Arg-Ser bonds in heat-denatured bovine plasma kininogen to release Lys-bradykinin. This Protobothrops elegans (Elegant pitviper) protein is Thrombin-like enzyme elegaxobin-2.